Consider the following 70-residue polypeptide: Large ribosomal subunit protein bL31 (70 aa).

Positions 16, 18, 37, and 40 each coordinate Zn(2+).

The protein belongs to the bacterial ribosomal protein bL31 family. Type A subfamily. In terms of assembly, part of the 50S ribosomal subunit. Requires Zn(2+) as cofactor.

Functionally, binds the 23S rRNA. The protein is Large ribosomal subunit protein bL31 of Shewanella oneidensis (strain ATCC 700550 / JCM 31522 / CIP 106686 / LMG 19005 / NCIMB 14063 / MR-1).